We begin with the raw amino-acid sequence, 130 residues long: Small ribosomal subunit protein uS11 (130 aa).

Belongs to the universal ribosomal protein uS11 family. In terms of assembly, part of the 30S ribosomal subunit. Interacts with proteins S7 and S18. Binds to IF-3.

Functionally, located on the platform of the 30S subunit, it bridges several disparate RNA helices of the 16S rRNA. Forms part of the Shine-Dalgarno cleft in the 70S ribosome. The polypeptide is Small ribosomal subunit protein uS11 (Prochlorococcus marinus (strain MIT 9215)).